Here is a 690-residue protein sequence, read N- to C-terminus: eEF1A lysine and N-terminal methyltransferase (690 aa).

Residues 427–451 (AAASSASKKKNKKKAKQPASTGAKD) form a disordered region. A compositionally biased stretch (basic residues) spans 433–442 (SKKKNKKKAK).

Belongs to the methyltransferase superfamily.

The enzyme catalyses L-lysyl-[protein] + S-adenosyl-L-methionine = N(6)-methyl-L-lysyl-[protein] + S-adenosyl-L-homocysteine + H(+). The catalysed reaction is N(6)-methyl-L-lysyl-[protein] + S-adenosyl-L-methionine = N(6),N(6)-dimethyl-L-lysyl-[protein] + S-adenosyl-L-homocysteine + H(+). It catalyses the reaction N-terminal glycyl-L-lysyl-L-glutamyl-[protein] + 3 S-adenosyl-L-methionine = N-terminal N,N,N-trimethyl-glycyl-L-lysyl-L-glutamyl-[protein] + 3 S-adenosyl-L-homocysteine + 3 H(+). Its function is as follows. Dual methyltransferase that catalyzes methylation of elongation factor 1-alpha (eef1a1 and eef1a2) at two different positions, and is therefore involved in the regulation of mRNA translation. Via its C-terminus, methylates the N-terminus of eef1a1 and eef1a2. Via its N-terminus dimethylates lysine residues of eef1a1 and eef1a2. The sequence is that of eEF1A lysine and N-terminal methyltransferase (mettl13) from Danio rerio (Zebrafish).